The following is a 411-amino-acid chain: CinA-like protein (411 aa).

It belongs to the CinA family.

In Dictyoglomus thermophilum (strain ATCC 35947 / DSM 3960 / H-6-12), this protein is CinA-like protein.